A 141-amino-acid polypeptide reads, in one-letter code: Nuclear transcription factor Y subunit B-1 (141 aa).

The tract at residues 1–23 is disordered; sequence MADTPSSPAGDGGESGGSVREQD. Alanine 2 carries the post-translational modification N-acetylalanine. The DNA-binding element occupies 26-32; that stretch reads LPIANIS. Positions 53-64 are subunit association domain (SAD); the sequence is VQECVSEFISFI. The segment at 114 to 141 is disordered; it reads DNKGSGKSGDGSNRDAGGGVSGEEMPSW.

It belongs to the NFYB/HAP3 subunit family. As to quaternary structure, heterotrimeric transcription factor composed of three components, NF-YA, NF-YB and NF-YC. NF-YB and NF-YC must interact and dimerize for NF-YA association and DNA binding. Binds directly with DPB3-1. Ubiquitous. Predominantly expressed in leaves, flowers and siliques.

It localises to the nucleus. Functionally, component of the NF-Y/HAP transcription factor complex. The NF-Y complex stimulates the transcription of various genes by recognizing and binding to a CCAAT motif in promoters. The chain is Nuclear transcription factor Y subunit B-1 from Arabidopsis thaliana (Mouse-ear cress).